We begin with the raw amino-acid sequence, 612 residues long: MAKVIGIDLGTTNSVVAVMDGSEPTVLENREGDRTTPSVVAFTKTGERLVGKVAKRQAITNPDRTIISIKRHMGSDYKVRIDDKAYTPQEISAMILSKLKADAEEKLGEKITQAVITVPAYFTDAQRQATKDAGTIAGLEVLRIINEPTAAALAYGLDKGEDQRILVFDLGGGTFDVSILELGGGTFQVIATAGNNKLGGDDFDERIVNYLADRFQREHGIDLRKDKQALQRLREAAEKAKIELSSVTTTNINLPFISMTADGPVHMDETLTRAKFEELTADLVEATMGPTRQALQDAGLEPGEIDKVLLVGGSTRIPAVQEAVRRFFGKEPYKGINPDEVVAMGAAIQAAVIKGDVKDVLLLDVTPLSLGIETLGGVFTKLIERNTTIPTRKSQIFSTAADGQTQVEIHVLQGEREMAAYNKTLGRFILDGIPPAPRGVPKIEVTFDIDVNGIVHVSAKDLGTGKEQKITIQSQTSMSKEEIERAIKEAEAMAAEDKKRREEAEIRNNADAAVYNAEKLIKESEGKGIDPSLIDAVKGAIEPVKEALKGTDVNAVKQATEKLTEAVYKLSSAIYEKTGSAGTGAGSQAGSAAGSGDGQSMDAEFKVKDEDK.

T174 carries the phosphothreonine; by autocatalysis modification. A disordered region spans residues 579–612; sequence GSAGTGAGSQAGSAAGSGDGQSMDAEFKVKDEDK. Over residues 581 to 597 the composition is skewed to gly residues; the sequence is AGTGAGSQAGSAAGSGD. The segment covering 603–612 has biased composition (basic and acidic residues); that stretch reads AEFKVKDEDK.

The protein belongs to the heat shock protein 70 family.

Its function is as follows. Acts as a chaperone. This chain is Chaperone protein DnaK, found in Symbiobacterium thermophilum (strain DSM 24528 / JCM 14929 / IAM 14863 / T).